A 198-amino-acid chain; its full sequence is MICOS complex subunit MIC26 (198 aa).

An N-terminal signal peptide occupies residues 1–25; the sequence is MFKVIHRYVGPASLSLLTFKVYASS. The chain crosses the membrane as a helical span at residues 108-128; that stretch reads PGFFPRLGVIGFAGVVGLVLA. A glycan (O-linked (Xyl...) (chondroitin sulfate) serine) is linked at S162.

Belongs to the apolipoprotein O/MICOS complex subunit Mic27 family. Component of the mitochondrial contact site and cristae organizing system (MICOS) complex, composed of at least MICOS10/MIC10, CHCHD3/MIC19, CHCHD6/MIC25, APOOL/MIC27, IMMT/MIC60, APOO/MIC23/MIC26 and MICOS13/MIC13. This complex was also known under the names MINOS or MitOS complex. The MICOS complex associates with mitochondrial outer membrane proteins SAMM50, MTX1 and MTX2 (together described as components of the mitochondrial outer membrane sorting assembly machinery (SAM) complex) and DNAJC11, mitochondrial inner membrane protein TMEM11 and with HSPA9. The MICOS and SAM complexes together with DNAJC11 are part of a large protein complex spanning both membranes termed the mitochondrial intermembrane space bridging (MIB) complex. Interacts with IMMT/MIC60. Interacts with MICOS10/MIC10 and APOOL/MIC27. O-glycosylation; glycosaminoglycan of chondroitin-sulfate type.

The protein resides in the mitochondrion inner membrane. The protein localises to the secreted. It localises to the mitochondrion. It is found in the endoplasmic reticulum membrane. Its subcellular location is the golgi apparatus membrane. Component of the MICOS complex, a large protein complex of the mitochondrial inner membrane that plays crucial roles in the maintenance of crista junctions, inner membrane architecture, and formation of contact sites to the outer membrane. Plays a crucial role in crista junction formation and mitochondrial function. Can induce cardiac lipotoxicity by enhancing mitochondrial respiration and fatty acid metabolism in cardiac myoblasts. Promotes cholesterol efflux from macrophage cells. Detected in HDL, LDL and VLDL. Secreted by a microsomal triglyceride transfer protein (MTTP)-dependent mechanism, probably as a VLDL-associated protein that is subsequently transferred to HDL. The sequence is that of MICOS complex subunit MIC26 (APOO) from Bos taurus (Bovine).